The chain runs to 140 residues: Putative peptidyl-tRNA hydrolase PTRHD1 (140 aa).

Belongs to the PTH2 family. PTRHD1 subfamily.

The enzyme catalyses an N-acyl-L-alpha-aminoacyl-tRNA + H2O = an N-acyl-L-amino acid + a tRNA + H(+). Its function is as follows. As a putative peptidyl-tRNA hydrolase, it might be involved in releasing tRNAs from the ribosome during protein synthesis. Some evidence, however, suggests that it lacks peptidyl-tRNA hydrolase activity. The polypeptide is Putative peptidyl-tRNA hydrolase PTRHD1 (PTRHD1) (Homo sapiens (Human)).